The chain runs to 96 residues: ASNSD1 upstream open reading frame protein (96 aa).

A compositionally biased stretch (basic and acidic residues) spans 1–10; that stretch reads MPSRGTRPED. The tract at residues 1–28 is disordered; that stretch reads MPSRGTRPEDSSVLIPTDNSTPHKEDLS. Residues 23–96 are a coiled coil; sequence HKEDLSSKIK…ENLDKTKIKK (74 aa).

As to quaternary structure, component of the PAQosome complex which is responsible for the biogenesis of several protein complexes and which consists of R2TP complex members RUVBL1, RUVBL2, RPAP3 and PIH1D1, URI complex members PFDN2, PFDN6, PDRG1, UXT and URI1 as well as ASDURF, POLR2E and DNAAF10/WDR92.

The protein resides in the cytoplasm. The chain is ASNSD1 upstream open reading frame protein from Homo sapiens (Human).